The chain runs to 465 residues: ATP synthase subunit beta (465 aa).

ATP is bound at residue Gly-148–Thr-155.

Belongs to the ATPase alpha/beta chains family. F-type ATPases have 2 components, CF(1) - the catalytic core - and CF(0) - the membrane proton channel. CF(1) has five subunits: alpha(3), beta(3), gamma(1), delta(1), epsilon(1). CF(0) has three main subunits: a(1), b(2) and c(9-12). The alpha and beta chains form an alternating ring which encloses part of the gamma chain. CF(1) is attached to CF(0) by a central stalk formed by the gamma and epsilon chains, while a peripheral stalk is formed by the delta and b chains.

The protein resides in the cell inner membrane. The catalysed reaction is ATP + H2O + 4 H(+)(in) = ADP + phosphate + 5 H(+)(out). Its function is as follows. Produces ATP from ADP in the presence of a proton gradient across the membrane. The catalytic sites are hosted primarily by the beta subunits. The sequence is that of ATP synthase subunit beta from Neisseria meningitidis serogroup A / serotype 4A (strain DSM 15465 / Z2491).